The chain runs to 330 residues: Type II restriction enzyme Cfr9I (330 aa).

This sequence belongs to the XcyI type II restriction endonuclease family. Mg(2+) is required as a cofactor.

It carries out the reaction Endonucleolytic cleavage of DNA to give specific double-stranded fragments with terminal 5'-phosphates.. An E and P subtype restriction enzyme that recognizes the double-stranded sequence 5'-CCCGGG-3' and cleaves after C-1. The polypeptide is Type II restriction enzyme Cfr9I (cfr9IR) (Citrobacter freundii).